A 463-amino-acid chain; its full sequence is 4-hydroxybenzoate polyprenyltransferase, mitochondrial (463 aa).

Disordered stretches follow at residues 28–48 (NNNTNNNNNNNGINKYNSTFN) and 133–152 (LLDDNNSNSNNNNNSNNNKP). Low complexity predominate over residues 137-150 (NNSNSNNNNNSNNN). The next 7 membrane-spanning stretches (helical) occupy residues 181–201 (IGVWLLLYPCCWSISLAAPAG), 206–226 (LKTMLVFGIGAYVMRSAGCVI), 257–277 (LIFLGGQLLASFGLILSSLNY), 305–325 (FVLGLAFNWGALAGYSAIAGS), 330–350 (IVAPLYLAGISWTMVYDTIYA), 375–395 (IILSVFSGLVISGMFLTGIAA), and 431–451 (FISNKNFGLYFLLIIIVSKLL).

Belongs to the UbiA prenyltransferase family. It depends on Mg(2+) as a cofactor.

The protein resides in the mitochondrion inner membrane. The catalysed reaction is an all-trans-polyprenyl diphosphate + 4-hydroxybenzoate = a 4-hydroxy-3-(all-trans-polyprenyl)benzoate + diphosphate. It functions in the pathway cofactor biosynthesis; ubiquinone biosynthesis. Catalyzes the prenylation of para-hydroxybenzoate (PHB) with an all-trans polyprenyl group. Mediates the second step in the final reaction sequence of coenzyme Q (CoQ) biosynthesis, which is the condensation of the polyisoprenoid side chain with PHB. Its function is as follows. Catalyzes the prenylation of para-hydroxybenzoate (PHB) with an all-trans polyprenyl group. Mediates the second step in the final reaction sequence of coenzyme Q (CoQ) biosynthesis, which is the condensation of the polyisoprenoid side chain with PHB, generating the first membrane-bound Q intermediate. This chain is 4-hydroxybenzoate polyprenyltransferase, mitochondrial, found in Dictyostelium discoideum (Social amoeba).